The following is a 187-amino-acid chain: uncharacterized protein (187 aa).

Residues 127-172 (KQPQVTLTQLQEELDEAKTRLALKEKELLEALSEISKLRLQLSNQL) adopt a coiled-coil conformation.

This is an uncharacterized protein from Tomato torrado virus (isolate Solanum lycopersicum/Spain/PRIToTV0301/-) (ToTV).